Here is a 168-residue protein sequence, read N- to C-terminus: Small ribosomal subunit protein uS5c (168 aa).

The S5 DRBM domain maps to 17–80 (WSERVIQITR…SDCKKQIIEF (64 aa)).

It belongs to the universal ribosomal protein uS5 family. As to quaternary structure, part of the 30S ribosomal subunit. Contacts protein S4.

Its subcellular location is the plastid. It localises to the chloroplast. With S4 and S12 plays an important role in translational accuracy. The polypeptide is Small ribosomal subunit protein uS5c (rps5) (Cyanidium caldarium (Red alga)).